The chain runs to 147 residues: Allograft inflammatory factor 1 (147 aa).

The residue at position 2 (serine 2) is an N-acetylserine. Lysine 11 carries the N6-acetyllysine modification. Phosphoserine is present on serine 39. EF-hand domains lie at 45–80 (SKLEGFKEKYMEFDLNGNGDIDIMSLKRMLEKLGVP) and 81–115 (KTHLELKKLIGEVSSGSGETFSYPDFLRMMLGKRS). Ca(2+) is bound by residues aspartate 58, asparagine 60, asparagine 62, aspartate 64, threonine 100, and aspartate 105. The segment at 128–147 (AREKEKPTGPPAKKAISELP) is disordered.

As to quaternary structure, homodimer (Potential). Monomer. Interacts with LCP1. Post-translationally, phosphorylated on serine residues.

Its subcellular location is the cytoplasm. The protein localises to the cytoskeleton. It is found in the cell projection. The protein resides in the ruffle membrane. It localises to the phagocytic cup. Functionally, actin-binding protein that enhances membrane ruffling and RAC activation. Enhances the actin-bundling activity of LCP1. Binds calcium. Plays a role in RAC signaling and in phagocytosis. May play a role in macrophage activation and function. Promotes the proliferation of vascular smooth muscle cells and of T-lymphocytes. Enhances lymphocyte migration. Plays a role in vascular inflammation. This chain is Allograft inflammatory factor 1 (AIF1), found in Macaca mulatta (Rhesus macaque).